The primary structure comprises 349 residues: Putative ABC transporter permease protein MJ0087 (349 aa).

A run of 9 helical transmembrane segments spans residues 15–35, 69–89, 100–120, 135–155, 166–186, 206–226, 254–274, 295–315, and 318–338; these read IIFG…ALCV, IFAA…MQCI, MGIS…FGFG, MITI…LLLA, ILAG…IQYF, AIWT…IYFM, LIGM…LGII, FLIP…DTFA, and IIAP…APMF.

Belongs to the binding-protein-dependent transport system permease family. FecCD subfamily.

It localises to the cell membrane. Functionally, probably part of a binding-protein-dependent transport system. Probably responsible for the translocation of the substrate across the membrane. This chain is Putative ABC transporter permease protein MJ0087, found in Methanocaldococcus jannaschii (strain ATCC 43067 / DSM 2661 / JAL-1 / JCM 10045 / NBRC 100440) (Methanococcus jannaschii).